A 741-amino-acid polypeptide reads, in one-letter code: Pentatricopeptide repeat-containing protein At1g08070, chloroplastic (741 aa).

13 PPR repeats span residues 98-132 (NLLI…GLLP), 133-167 (NSYT…GCDL), 168-202 (DLYV…DVVS), 203-229 (YTAL…IPVK), 230-264 (DVVS…NVRP), 265-299 (DEST…GFGS), 300-330 (NLKI…LPYK), 331-365 (DVIS…GETP), 366-396 (NDVT…IDKR), 403-433 (ASSL…ILHK), 434-468 (SLSS…GIQP), 469-499 (DDIT…MTQD), and 505-535 (KLEH…MEME). The interval 540–615 (IWCSLLKACK…VPGCSSIEID (76 aa)) is type E motif. The tract at residues 616 to 646 (SVVHEFIIGDKFHPRNREIYGMLEEMEVLLE) is type E(+) motif. The tract at residues 647 to 741 (KAGFVPDTSE…DGVCSCNDYW (95 aa)) is type DYW motif.

This sequence belongs to the PPR family. PCMP-H subfamily. As to quaternary structure, interacts with ORRM1. Interacts with VAR3/OZ1.

The protein localises to the plastid. Its subcellular location is the chloroplast. Involved in multiple sites RNA editing events in chloroplasts. Involved in the editing of the site 9 of ndhB (ndhB-9) and site 1 of ndhG (ndhG-1) transcripts, which are two plastid-encoded subunits of the chloroplast NAD(P)H dehydrogenase (NDH) complex. Not essential for the activity of the NDH complex of the photosynthetic electron transport chain. This is Pentatricopeptide repeat-containing protein At1g08070, chloroplastic (PCMP-H12) from Arabidopsis thaliana (Mouse-ear cress).